The sequence spans 530 residues: Pentatricopeptide repeat-containing protein At5g56310 (530 aa).

PPR repeat units follow at residues 77 to 114 (NTYLHNTMIRALSLLDEPNAHSIAITVYRKLWALCAKP), 115 to 149 (DTFTFPFVLKIAVRVSDVWFGRQIHGQVVVFGFDS), 150 to 180 (SVHVVTGLIQMYFSCGGLGDARKMFDEMLVK), 181 to 211 (DVNVWNALLAGYGKVGEMDEARSLLEMMPCW), 214 to 248 (NEVSWTCVISGYAKSGRASEAIEVFQRMLMENVEP), 249 to 283 (DEVTLLAVLSACADLGSLELGERICSYVDHRGMNR), 284 to 314 (AVSLNNAVIDMYAKSGNITKALDVFECVNER), 315 to 349 (NVVTWTTIIAGLATHGHGAEALAMFNRMVKAGVRP), 350 to 380 (NDVTFIAILSACSHVGWVDLGKRLFNSMRSK), and 386 to 420 (NIEHYGCMIDLLGRAGKLREADEVIKSMPFKANAA). A type E motif region spans residues 421–496 (IWGSLLAASN…MAGESSIEVE (76 aa)). Residues 497–527 (NRVYKFISGDLTHPQVERIHEILQEMDLQIQ) form a type E(+) motif region.

Belongs to the PPR family. PCMP-E subfamily.

This chain is Pentatricopeptide repeat-containing protein At5g56310 (PCMP-E13), found in Arabidopsis thaliana (Mouse-ear cress).